A 202-amino-acid polypeptide reads, in one-letter code: Small ribosomal subunit protein uS4c (202 aa).

Residues 90 to 153 (MRLDNVIFRL…KSEAIISKNI (64 aa)) form the S4 RNA-binding domain.

It belongs to the universal ribosomal protein uS4 family. Part of the 30S ribosomal subunit. Contacts protein S5. The interaction surface between S4 and S5 is involved in control of translational fidelity.

The protein localises to the plastid. It localises to the chloroplast. Its function is as follows. One of the primary rRNA binding proteins, it binds directly to 16S rRNA where it nucleates assembly of the body of the 30S subunit. Functionally, with S5 and S12 plays an important role in translational accuracy. This chain is Small ribosomal subunit protein uS4c (rps4), found in Cyathophorum bulbosum (Moss).